A 74-amino-acid chain; its full sequence is Control protein C.MunI (74 aa).

One can recognise an HTH cro/C1-type domain in the interval 12-67; that stretch reads LKKLRKEKTDLSQESFAAQIDLDRTYYSSIENGKRNVSLVNLEKISAGLGITLSEL. Residues 23–42 constitute a DNA-binding region (H-T-H motif); the sequence is SQESFAAQIDLDRTYYSSIE.

Functionally, probably controls expression of its associated restriction-modification system MunI. This Mycoplasma sp protein is Control protein C.MunI.